The chain runs to 1022 residues: Probable beta-galactosidase B (1022 aa).

The first 20 residues, 1–20 (MARFPQLLFLLLASIGLLSA), serve as a signal peptide directing secretion. Residue Asn23 is glycosylated (N-linked (GlcNAc...) asparagine). Tyr90 contacts substrate. Asn100 carries an N-linked (GlcNAc...) asparagine glycan. Residues Asn135, Ala136, Glu137, and Asn195 each contribute to the substrate site. The Proton donor role is filled by Glu196. The N-linked (GlcNAc...) asparagine glycan is linked to Asn211. Tyr265 serves as a coordination point for substrate. The cysteines at positions 271 and 324 are disulfide-linked. Glu308 serves as the catalytic Nucleophile. Tyr373 serves as a coordination point for substrate. N-linked (GlcNAc...) asparagine glycans are attached at residues Asn411, Asn456, Asn541, Asn554, Asn626, Asn777, Asn790, Asn832, Asn880, and Asn881.

Belongs to the glycosyl hydrolase 35 family.

The protein localises to the secreted. The catalysed reaction is Hydrolysis of terminal non-reducing beta-D-galactose residues in beta-D-galactosides.. Its function is as follows. Cleaves beta-linked terminal galactosyl residues from gangliosides, glycoproteins, and glycosaminoglycans. The sequence is that of Probable beta-galactosidase B (lacB) from Aspergillus terreus (strain NIH 2624 / FGSC A1156).